Here is a 179-residue protein sequence, read N- to C-terminus: Small ribosomal subunit protein uS7 (179 aa).

Belongs to the universal ribosomal protein uS7 family. As to quaternary structure, part of the 30S ribosomal subunit. Contacts proteins S9 and S11.

Its function is as follows. One of the primary rRNA binding proteins, it binds directly to 16S rRNA where it nucleates assembly of the head domain of the 30S subunit. Is located at the subunit interface close to the decoding center, probably blocks exit of the E-site tRNA. The polypeptide is Small ribosomal subunit protein uS7 (Shigella flexneri serotype 5b (strain 8401)).